The primary structure comprises 2871 residues: Fibrillin-1 (2871 aa).

The N-terminal stretch at 1–24 (MRRGRLLEVALGFTVLLASYTSHR) is a signal peptide. The propeptide occupies 25–44 (AEANLEAGNGKETRASRAKR). Basic and acidic residues predominate over residues 29 to 39 (LEAGNGKETRA). The tract at residues 29 to 49 (LEAGNGKETRASRAKRRGGGG) is disordered. Residues 45–81 (RGGGGHDALKGPNVCGSRYNAYCCPGWKTLPGGNQCI) are fibrillin unique N-terminal (FUN) domain. Positions 45 to 450 (RGGGGHDALK…PPRVLPVNVT (406 aa)) are N-terminal domain. Intrachain disulfides connect Cys-59/Cys-68, Cys-67/Cys-80, Cys-85/Cys-94, Cys-89/Cys-100, Cys-102/Cys-111, Cys-119/Cys-129, Cys-123/Cys-134, Cys-136/Cys-145, Cys-150/Cys-160, Cys-154/Cys-166, and Cys-168/Cys-177. 3 EGF-like domains span residues 81–112 (IVPICRHSCGDGFCSRPNMCTCPSGQIAPSCG), 115–146 (SIQHCNIRCMNGGSCSDDHCLCQKGYIGTHCG), and 147–178 (QPVCESGCLNGGRCVAPNRCACTYGFTGPQCE). An interaction with MFAP4 region spans residues 119-329 (CNIRCMNGGS…YTSPDGTRCI (211 aa)). Residues 184–236 (GPCFTVVSNQMCQGQLSGIVCTKTLCCATVGRAWGHPCEMCPAQPHPCRRGFI) enclose the TB 1 domain. The segment at 195-221 (CQGQLSGIVCTKTLCCATVGRAWGHPC) is hybrid domain 1. The EGF-like 4; calcium-binding domain maps to 246 to 287 (DVDECQAIPGLCQGGNCINTVGSFECKCPAGHKFNEVSQKCE). Disulfide bonds link Cys-250/Cys-262, Cys-257/Cys-271, Cys-273/Cys-286, Cys-292/Cys-304, Cys-299/Cys-313, and Cys-315/Cys-328. Ser-268 carries an O-linked (Glc) serine glycan. Residues 288–329 (DIDECSTIPGICDGGECTNTVSSYFCKCPPGFYTSPDGTRCI) enclose the EGF-like 5; calcium-binding domain. Positions 334–389 (GYCYTALTNGRCSNQLPQSITKMQCCCDVGRCWSPGVTVTPEMCPIRATEDFNKLC) constitute a TB 2 domain. Asn-448 carries an N-linked (GlcNAc...) asparagine glycan. Residues 449–489 (VTDYCQLFRYLCHNGRCIPTPGSYRCECNKGFQLDLRGECI) enclose the EGF-like 6 domain. 15 disulfides stabilise this stretch: Cys-453–Cys-465, Cys-460–Cys-474, Cys-476–Cys-488, Cys-494–Cys-504, Cys-499–Cys-513, Cys-515–Cys-528, Cys-534–Cys-546, Cys-541–Cys-555, Cys-557–Cys-570, Cys-576–Cys-587, Cys-582–Cys-596, Cys-598–Cys-611, Cys-617–Cys-628, Cys-623–Cys-637, and Cys-639–Cys-652. O-linked (Glc) serine glycosylation is present at Ser-471. Positions 490–529 (DVDECEKNPCAGGECINNQGSYTCQCRPGYQSTLTRTECR) constitute an EGF-like 7; calcium-binding domain. O-linked (Glc) serine glycosylation is present at Ser-510. The EGF-like 8; calcium-binding domain occupies 530 to 571 (DIDECLQNGRICNNGRCINTDGSFHCVCNAGFHVTRDGKNCE). The region spanning 572–612 (DMDECSIRNMCLNGMCINEDGSFKCICKPGFQLASDGRYCK) is the EGF-like 9; calcium-binding domain. Residues 613–653 (DINECETSGICMNGRCVNTDGSYRCECFPGLAVGLDGRVCV) enclose the EGF-like 10; calcium-binding domain. The region spanning 659-711 (STCYGGYKRGQCVKPLFGAVTKSECCCASTEYAFGEPCQPCPSQNSAEYQALC) is the TB 3 domain. Positions 723 to 764 (DINECALDPDICPNGICENLRGTYKCICNSGYEVDSTGKNCV) constitute an EGF-like 11; calcium-binding domain. 16 cysteine pairs are disulfide-bonded: Cys-727/Cys-739, Cys-734/Cys-748, Cys-750/Cys-763, Cys-769/Cys-781, Cys-776/Cys-790, Cys-792/Cys-805, Cys-811/Cys-821, Cys-816/Cys-830, Cys-832/Cys-845, Cys-853/Cys-875, Cys-862/Cys-887, Cys-876/Cys-890, Cys-896/Cys-908, Cys-914/Cys-926, Cys-921/Cys-935, and Cys-937/Cys-950. The 42-residue stretch at 765-806 (DINECVLNSLLCDNGQCRNTPGSFVCTCPKGFIYKPDLKTCE) folds into the EGF-like 12; calcium-binding domain. The EGF-like 13; calcium-binding domain maps to 807–846 (DIDECESSPCINGVCKNSPGSFICECSSESTLDPTKTICI). Residues 851–902 (GTCWQTIIDGRCEININGATLKSQCCSSLGAAWGSPCTPCQVDPICGKGYSR) form the TB 4 domain. The tract at residues 862 to 887 (CEININGATLKSQCCSSLGAAWGSPC) is hybrid domain 2. Residues 910 to 951 (DIDECEVFPGVCKNGLCVNSKGSFKCQCPNGMTLDATGRICL) form the EGF-like 14; calcium-binding domain. The TB 5 domain occupies 956 to 1008 (ETCFLRYEDEECTLPVVGRHRMDACCCSVGAAWGTEECEECPPRNTPEYEELC). The EGF-like 15; calcium-binding domain occupies 1028 to 1069 (DINECKMIPNLCTHGKCRNTIGSFKCRCDSGFALDSEERNCI). 43 disulfide bridges follow: Cys-1032-Cys-1044, Cys-1039-Cys-1053, Cys-1055-Cys-1068, Cys-1074-Cys-1086, Cys-1081-Cys-1095, Cys-1097-Cys-1111, Cys-1117-Cys-1129, Cys-1124-Cys-1138, Cys-1140-Cys-1153, Cys-1159-Cys-1171, Cys-1201-Cys-1212, Cys-1208-Cys-1221, Cys-1223-Cys-1236, Cys-1242-Cys-1254, Cys-1249-Cys-1263, Cys-1265-Cys-1278, Cys-1284-Cys-1296, Cys-1291-Cys-1305, Cys-1307-Cys-1320, Cys-1326-Cys-1339, Cys-1333-Cys-1348, Cys-1350-Cys-1361, Cys-1367-Cys-1380, Cys-1374-Cys-1389, Cys-1391-Cys-1402, Cys-1408-Cys-1420, Cys-1415-Cys-1429, Cys-1450-Cys-1461, Cys-1456-Cys-1470, Cys-1472-Cys-1485, Cys-1491-Cys-1502, Cys-1497-Cys-1511, Cys-1513-Cys-1526, Cys-1534-Cys-1562, Cys-1549-Cys-1574, Cys-1563-Cys-1577, Cys-1564-Cys-1589, Cys-1610-Cys-1622, Cys-1617-Cys-1631, Cys-1633-Cys-1646, Cys-1652-Cys-1663, Cys-1658-Cys-1672, and Cys-1674-Cys-1687. The EGF-like 16; calcium-binding domain occupies 1070 to 1112 (DIDECRISPDLCGRGQCVNTPGDFECKCDEGYESGFMMMKNCM). Residues 1113 to 1154 (DIDECQRDPLLCRGGVCLNTEGSYRCECPSGHQMSPNISACI) form the EGF-like 17; calcium-binding domain. O-linked (Glc) serine glycosylation occurs at Ser-1135. The N-linked (GlcNAc...) asparagine glycan is linked to Asn-1149. The EGF-like 18; calcium-binding domain maps to 1155–1196 (DINECELSAHLCPHGRCVNLIGKYQRARNPGYHSTPDRLFCV). An EGF-like 19; calcium-binding domain is found at 1197 to 1237 (DIDECSIMNGGCETFCTNSEGSYECSCQPGFALMPDQRSCT). The O-linked (Glc) serine glycan is linked to Ser-1218. One can recognise an EGF-like 20; calcium-binding domain in the interval 1238–1279 (DIDECEDNPNICDGGQCTNIPGEYRCLCYDGFMASEDMKTCV). Residues 1280–1321 (DVNECDLNPNICLSGTCENTKGSFICHCDMGYSGKKGKTGCT) form the EGF-like 21; calcium-binding domain. O-linked (Glc) serine glycosylation occurs at Ser-1302. The EGF-like 22; calcium-binding domain maps to 1322–1362 (DINECEIGAHNCDRHAVCTNTAGSFNCSCSPGWIGDGIKCT). A glycan (O-linked (Glc) serine) is linked at Ser-1345. The N-linked (GlcNAc...) asparagine glycan is linked to Asn-1347. Residues 1363-1403 (DLDECSNGTHMCSQHADCKNTMGSYRCLCKEGYTGDGFTCA) form the EGF-like 23; calcium-binding domain. N-linked (GlcNAc...) asparagine glycosylation is present at Asn-1369. Ser-1386 carries O-linked (Glc) serine glycosylation. In terms of domain architecture, EGF-like 24; calcium-binding spans 1404-1445 (DLDECSENVKLCGNVQCLYAPGGYHCEYDMGFVPSADRKSCV). The EGF-like 25; calcium-binding domain occupies 1446–1486 (DSDECSLPNICVFGTCHNLPGLFRCECEIGYELDRSGGNCT). A glycan (N-linked (GlcNAc...) asparagine) is linked at Asn-1484. Positions 1487–1527 (DVNECLEPPTCISGNCVNTPGSYTCVCPPDFELNPTRVGCV) constitute an EGF-like 26; calcium-binding domain. Ser-1508 carries O-linked (Glc) serine glycosylation. The C-terminal domain stretch occupies residues 1528-2731 (DTRSGNCYLD…GYPKRGRKRR (1204 aa)). The 58-residue stretch at 1532 to 1589 (GNCYLDVRPRGDNGDTACSNEIGVGVSKASCCCSLGKAWGTPCEQCPPVNTSEYKILC) folds into the TB 6 domain. A Cell attachment site motif is present at residues 1541-1543 (RGD). An N-linked (GlcNAc...) asparagine glycan is attached at Asn-1581. Residues 1606-1647 (DIDECQELPGLCQGGKCINTFGSFQCRCPTGYYLNEDTRVCD) enclose the EGF-like 27; calcium-binding domain. O-linked (Glc) serine glycosylation occurs at Ser-1628. Residues 1648–1688 (DVNECETPGICGPGTCYNTVGNYTCICPPDYMQVNGGNNCM) enclose the EGF-like 28; calcium-binding domain. N-linked (GlcNAc...) asparagine glycosylation is present at Asn-1669. The 56-residue stretch at 1693–1748 (SLCYRNYYADNQTCDGELLFNMTKKMCCCSYNIGRAWNKPCEQCPIPSTDEFATLC) folds into the TB 7 domain. N-linked (GlcNAc...) asparagine glycans are attached at residues Asn-1703 and Asn-1713. Positions 1766 to 1807 (DIDECREIPGVCENGVCINMVGSFRCECPVGFFYNDKLLVCE) constitute an EGF-like 29; calcium-binding domain. 40 cysteine pairs are disulfide-bonded: Cys-1770–Cys-1782, Cys-1777–Cys-1791, Cys-1793–Cys-1806, Cys-1812–Cys-1824, Cys-1818–Cys-1833, Cys-1835–Cys-1847, Cys-1853–Cys-1865, Cys-1860–Cys-1874, Cys-1876–Cys-1889, Cys-1895–Cys-1905, Cys-1900–Cys-1914, Cys-1916–Cys-1928, Cys-1934–Cys-1947, Cys-1942–Cys-1956, Cys-1958–Cys-1971, Cys-1977–Cys-1989, Cys-1984–Cys-1998, Cys-2000–Cys-2011, Cys-2017–Cys-2029, Cys-2024–Cys-2038, Cys-2040–Cys-2053, Cys-2061–Cys-2083, Cys-2070–Cys-2096, Cys-2084–Cys-2099, Cys-2085–Cys-2111, Cys-2131–Cys-2142, Cys-2137–Cys-2151, Cys-2153–Cys-2164, Cys-2170–Cys-2181, Cys-2176–Cys-2190, Cys-2192–Cys-2204, Cys-2210–Cys-2221, Cys-2217–Cys-2230, Cys-2232–Cys-2245, Cys-2251–Cys-2265, Cys-2258–Cys-2274, Cys-2276–Cys-2289, Cys-2295–Cys-2307, Cys-2302–Cys-2316, and Cys-2318–Cys-2331. The 41-residue stretch at 1808–1848 (DIDECQNGPVCQRNAECINTAGSYRCDCKPGYRFTSTGQCN) folds into the EGF-like 30; calcium-binding domain. Ser-1830 is a glycosylation site (O-linked (Glc) serine). The region spanning 1849–1890 (DRNECQEIPNICSHGQCIDTVGSFYCLCHTGFKTNADQTMCL) is the EGF-like 31; calcium-binding domain. A glycan (O-linked (Glc) serine) is linked at Ser-1871. Residues 1891-1929 (DINECERDACGNGTCRNTIGSFNCRCNHGFILSHNNDCI) form the EGF-like 32; calcium-binding domain. An N-linked (GlcNAc...) asparagine glycan is attached at Asn-1902. A glycan (O-linked (Glc) serine) is linked at Ser-1911. Residues 1930–1972 (DVDECATGNGNLCRNGQCINTVGSFQCQCNEGYEVAPDGRTCV) enclose the EGF-like 33; calcium-binding domain. Ser-1953 carries an O-linked (Glc) serine glycan. Residues 1973-2012 (DINECLLEPGKCAPGTCQNLDGSYRCICPPGYSLQNDKCE) form the EGF-like 34; calcium-binding domain. The EGF-like 35; calcium-binding domain occupies 2013–2054 (DIDECVEEPEICALGTCSNTEGSFKCLCPDGFSLSSTGRRCQ). Ser-2035 is a glycosylation site (O-linked (Glc) serine). In terms of domain architecture, TB 8 spans 2059-2111 (SYCYAKFEGGKCSSPKSRNHSKQECCCALKGEGWGDPCELCPTEPDEAFRQIC). N-linked (GlcNAc...) asparagine glycosylation occurs at Asn-2077. The EGF-like 36; calcium-binding domain maps to 2127 to 2165 (DMDECKEPDVCKHGQCINTDGSYRCECPFGYILEGNECV). Ser-2148 carries an O-linked (Glc) serine glycan. Residues 2166-2205 (DTDECSVGNPCGNGTCKNVIGGFECTCEEGFEPGPMMTCE) enclose the EGF-like 37; calcium-binding domain. Residue Asn-2178 is glycosylated (N-linked (GlcNAc...) asparagine). Residues 2206 to 2246 (DINECAQNPLLCAFRCVNTYGSYECKCPTGYVLREDRRMCK) enclose the EGF-like 38; calcium-binding domain. The O-linked (Glc) serine glycan is linked to Ser-2227. The region spanning 2247–2290 (DEDECEEGKHDCAEKQMECKNLIGMYICICGPGYQRRPDGEGCV) is the EGF-like 39; calcium-binding domain. Positions 2291–2332 (DENECQTKPGICENGRCLNTRGSYTCECNDGFTASPTQDECL) constitute an EGF-like 40; calcium-binding domain. An O-linked (Glc) serine glycan is attached at Ser-2313. The TB 9 domain maps to 2337-2390 (GYCFTEVLQNMCQIGSSNRNPVTKSECCCDGGRGWGPHCEICPFQGTVAFKKLC). The EGF-like 41; calcium-binding domain occupies 2402–2443 (DIDECKVIHDVCRNGECINDRGSYHCICKTGYTPDITGTACV). Disulfide bonds link Cys-2406–Cys-2418, Cys-2413–Cys-2427, Cys-2429–Cys-2442, Cys-2448–Cys-2459, Cys-2455–Cys-2468, Cys-2470–Cys-2483, Cys-2489–Cys-2500, Cys-2496–Cys-2509, Cys-2511–Cys-2522, Cys-2528–Cys-2541, Cys-2535–Cys-2550, Cys-2552–Cys-2565, Cys-2571–Cys-2581, Cys-2577–Cys-2590, Cys-2592–Cys-2605, Cys-2611–Cys-2622, Cys-2617–Cys-2631, Cys-2633–Cys-2646, Cys-2652–Cys-2663, Cys-2659–Cys-2672, and Cys-2674–Cys-2686. The 41-residue stretch at 2444-2484 (DLNECNQAPKPCNFICKNTEGSYQCSCPKGYILQEDGRSCK) folds into the EGF-like 42; calcium-binding domain. Ser-2465 carries an O-linked (Glc) serine glycan. An EGF-like 43; calcium-binding domain is found at 2485-2523 (DLDECATKQHNCQFLCVNTIGSFACKCPPGFTQHHTACI). The EGF-like 44; calcium-binding domain occupies 2524 to 2566 (DNNECTSDINLCGAKGICQNTPGSFTCECQRGFSLDQSGASCE). A glycan (O-linked (Glc) serine) is linked at Ser-2547. Residues 2567–2606 (DVDECEGNHRCQHGCQNIIGGYRCSCPQGYLQHYQWNQCV) form the EGF-like 45; calcium-binding domain. The EGF-like 46; calcium-binding domain occupies 2607-2647 (DENECLSAHICGGASCHNTLGSYKCMCPAGFQYEQFSGGCQ). O-linked (Glc) serine glycosylation occurs at Ser-2628. The region spanning 2648–2687 (DINECGSSQAPCSYGCSNTEGGYLCGCPPGYFRIGQGHCV) is the EGF-like 47; calcium-binding domain. Phosphoserine occurs at positions 2702 and 2709. Asn-2734, Asn-2750, and Asn-2767 each carry an N-linked (GlcNAc...) asparagine glycan.

It belongs to the fibrillin family. Interacts with COL16A1. Interacts with integrin alpha-V/beta-3. Interacts with ADAMTS10; this interaction promotes microfibril assembly. Interacts with THSD4; this interaction promotes fibril formation. Interacts (via N-terminal domain) with FBLN2 and FBLN5. Interacts with ELN. Forms a ternary complex with ELN and FBLN2 or FBLN5 and a significant interaction with ELN seen only in the presence of FBLN2 or FBLN5. Interacts (via N-terminal domain) with LTBP2 (via C-terminal domain) in a Ca(+2)-dependent manner. Interacts (via N-terminal domain) with LTBP1 (via C-terminal domain). Interacts with integrins ITGA5:ITGB1, ITGAV:ITGB3 and ITGAV:ITGB6. Interacts (via N-terminal domain) with BMP2, BMP4, BMP7, BMP10 and GDF5. Interacts (via N-terminal domain) with MFAP2 and MFAP5. Interacts with ADAMTSL5. Interacts with MFAP4. Interacts (via N-terminal domain) with TNFSF11 in a Ca(+2)-dependent manner. Interacts (via N-terminal domain) with EFEMP2; this interaction inhibits EFEMP2 binding to LOX and ELN. In terms of processing, cleavage of N- and C-terminus by furin is required for incorporation into the extracellular matrix and assembly into microfibrils. The C-terminus, which corresponds to the Asprosin chain, was initially thought to constitute a propeptide. Fibrillin-1 and Asprosin chains are still linked together during the secretion from cells, but are subsequently separated by furin, an essential step for incorporation of Fibrillin-1 into the nascent microfibrils. Forms intermolecular disulfide bonds either with other fibrillin-1 molecules or with other components of the microfibrils. Post-translationally, O-glycosylated on serine residues by POGLUT2 and POGLUT3 which is necessary for efficient protein secretion.

The protein resides in the secreted. The protein localises to the extracellular space. It is found in the extracellular matrix. Functionally, structural component of the 10-12 nm diameter microfibrils of the extracellular matrix, which conveys both structural and regulatory properties to load-bearing connective tissues. Fibrillin-1-containing microfibrils provide long-term force bearing structural support. In tissues such as the lung, blood vessels and skin, microfibrils form the periphery of the elastic fiber, acting as a scaffold for the deposition of elastin. In addition, microfibrils can occur as elastin-independent networks in tissues such as the ciliary zonule, tendon, cornea and glomerulus where they provide tensile strength and have anchoring roles. Fibrillin-1 also plays a key role in tissue homeostasis through specific interactions with growth factors, such as the bone morphogenetic proteins (BMPs), growth and differentiation factors (GDFs) and latent transforming growth factor-beta-binding proteins (LTBPs), cell-surface integrins and other extracellular matrix protein and proteoglycan components. Regulates osteoblast maturation by controlling TGF-beta bioavailability and calibrating TGF-beta and BMP levels, respectively. Negatively regulates osteoclastogenesis by binding and sequestering an osteoclast differentiation and activation factor TNFSF11. This leads to disruption of TNFSF11-induced Ca(2+) signaling and impairment of TNFSF11-mediated nuclear translocation and activation of transcription factor NFATC1 which regulates genes important for osteoclast differentiation and function. Mediates cell adhesion via its binding to cell surface receptors integrins ITGAV:ITGB3 and ITGA5:ITGB1. Binds heparin and this interaction plays an important role in the assembly of microfibrils. Its function is as follows. Hormone that targets the liver to increase plasma glucose levels. Secreted by white adipose tissue and circulates in the plasma. Acts in response to fasting and promotes blood glucose elevation by binding to the surface of hepatocytes. Promotes hepatocyte glucose release by activating the protein kinase A activity in the liver, resulting in rapid glucose release into the circulation. This Sus scrofa (Pig) protein is Fibrillin-1.